The chain runs to 243 residues: MLIIPAIDLKDGKCVRLKQGRMEDDTVFSDDPVATAQHWVNEGARRLHLVDLNGAFAGTPIHKPVVEAIAKAQPELPIQIGGGIRSLETIEHYLDAGVSFVIIGTKAVQDPEFVEQACKQFAGHIIVGIDAKDGMVATDGWANVTDVKATDLAKRFADAGVSSIVYTDIARDGMMQGVNVEQTVNLAQYSGLPVIASGGVTNLDDVRLLKGKPGILGAITGRAIYEGTLSLREAQLLLDQNTL.

Catalysis depends on aspartate 8, which acts as the Proton acceptor. The active-site Proton donor is aspartate 130.

The protein belongs to the HisA/HisF family.

Its subcellular location is the cytoplasm. It carries out the reaction 1-(5-phospho-beta-D-ribosyl)-5-[(5-phospho-beta-D-ribosylamino)methylideneamino]imidazole-4-carboxamide = 5-[(5-phospho-1-deoxy-D-ribulos-1-ylimino)methylamino]-1-(5-phospho-beta-D-ribosyl)imidazole-4-carboxamide. Its pathway is amino-acid biosynthesis; L-histidine biosynthesis; L-histidine from 5-phospho-alpha-D-ribose 1-diphosphate: step 4/9. The sequence is that of 1-(5-phosphoribosyl)-5-[(5-phosphoribosylamino)methylideneamino] imidazole-4-carboxamide isomerase from Acinetobacter baylyi (strain ATCC 33305 / BD413 / ADP1).